The primary structure comprises 184 residues: Protein Iojap-related, mitochondrial (184 aa).

A mitochondrion-targeting transit peptide spans 1–39; it reads MLTTLRSRCSSLLLNQSWKLAPNRIFASSPSFSSSAGIS.

This sequence belongs to the Iojap/RsfS family.

It localises to the mitochondrion. May be a ribosome silencing factor involved in organelle biogenesis and required for germination. The chain is Protein Iojap-related, mitochondrial from Arabidopsis thaliana (Mouse-ear cress).